The chain runs to 422 residues: Ornithine decarboxylase (422 aa).

At Lys71 the chain carries N6-(pyridoxal phosphate)lysine. Pyridoxal 5'-phosphate-binding positions include Ser203, Gly240, and 275 to 278 (EPGR). 331–332 (FD) serves as a coordination point for substrate. Catalysis depends on Cys359, which acts as the Proton donor; shared with dimeric partner. Asp360 contributes to the substrate binding site. Residue Tyr388 participates in pyridoxal 5'-phosphate binding.

The protein belongs to the Orn/Lys/Arg decarboxylase class-II family. As to quaternary structure, homodimer. Only the dimer is catalytically active, as the active sites are constructed of residues from both monomers. The cofactor is pyridoxal 5'-phosphate.

It carries out the reaction L-ornithine + H(+) = putrescine + CO2. Its pathway is amine and polyamine biosynthesis; putrescine biosynthesis via L-ornithine pathway; putrescine from L-ornithine: step 1/1. With respect to regulation, inhibited by antizyme (AZ) in response to polyamine levels. AZ inhibits the assembly of the functional homodimer by binding to ODC monomers and targeting them for ubiquitin-independent proteolytic destruction by the 26S proteasome. In terms of biological role, catalyzes the first and rate-limiting step of polyamine biosynthesis that converts ornithine into putrescine, which is the precursor for the polyamines, spermidine and spermine. Polyamines are essential for cell proliferation and are implicated in cellular processes, ranging from DNA replication to apoptosis. This Caenorhabditis elegans protein is Ornithine decarboxylase.